Reading from the N-terminus, the 167-residue chain is Small ribosomal subunit protein uS5 (167 aa).

In terms of domain architecture, S5 DRBM spans 12–75; that stretch reads LEERVVTINR…EDAKKNMVLV (64 aa).

The protein belongs to the universal ribosomal protein uS5 family. Part of the 30S ribosomal subunit. Contacts proteins S4 and S8.

In terms of biological role, with S4 and S12 plays an important role in translational accuracy. Functionally, located at the back of the 30S subunit body where it stabilizes the conformation of the head with respect to the body. This is Small ribosomal subunit protein uS5 from Listeria monocytogenes serotype 4b (strain F2365).